Here is a 365-residue protein sequence, read N- to C-terminus: MKIDGRPYRTIFPEAGGNAVTVIDQTRLPFAFELKRLASLDDAAVAIRTMVVRGAPLIGVTAAYGLALAMREDASEAGIERAAATLAATRPTAINLRWALDRMAAVLRRAPEAERAALAFTEAASIAEEDVASCRAIGEHGARILAEIAVKKGGPVNVLTHCNAGWLATVDWGTALAPIYVAHDAGVPVHVFVDETRPRNQGAALTAFELNAHGVPHTVIADNAGGHLMQHGQVDVCIVGSDRTTAAGDVCNKIGTYLKALAASDNRIPFYAALPFSTIDWTLADGVRDIPIEERDAREVTHLTGRTDDGAFATVAVVSPGSPVANPAFDVTPARLVTGLITERGVCAATEEGLAGLYPERRKAA.

Substrate is bound by residues 53-55 (RGA), R90, and Q201. D242 serves as the catalytic Proton donor. Residue 252–253 (NK) coordinates substrate.

This sequence belongs to the eIF-2B alpha/beta/delta subunits family. MtnA subfamily.

It catalyses the reaction 5-(methylsulfanyl)-alpha-D-ribose 1-phosphate = 5-(methylsulfanyl)-D-ribulose 1-phosphate. It participates in amino-acid biosynthesis; L-methionine biosynthesis via salvage pathway; L-methionine from S-methyl-5-thio-alpha-D-ribose 1-phosphate: step 1/6. In terms of biological role, catalyzes the interconversion of methylthioribose-1-phosphate (MTR-1-P) into methylthioribulose-1-phosphate (MTRu-1-P). The sequence is that of Methylthioribose-1-phosphate isomerase from Methylorubrum populi (strain ATCC BAA-705 / NCIMB 13946 / BJ001) (Methylobacterium populi).